Consider the following 204-residue polypeptide: Glideosome-associated protein 45 (204 aa).

The disordered stretch occupies residues 1–86 (MGNKCSRSKV…KEEIDYATQE (86 aa)). Glycine 2 is lipidated: N-myristoyl glycine. Residues 2–29 (GNKCSRSKVKEPKRKDIDELAERENLKK) form a targets GAP45 to the cell membrane; however, dispensable for the formation of the glideosome complex and the association with the inner membrane complex region. The span at 9–53 (KVKEPKRKDIDELAERENLKKQSEEIIEEKPEEVVEQVEETHEEP) shows a compositional bias: basic and acidic residues. Residues 54-73 (LEQEQELDEQKIEEEEEEPE) are compositionally biased toward acidic residues. Serine 89 is modified (phosphoserine; by CPK10). Residue serine 103 is modified to Phosphoserine; by CPK10 and PKB. Serine 149 bears the Phosphoserine; by CPK10 mark.

As to quaternary structure, component of the glideosome complex composed of GAP50, GAP45, MTIP and MyoA; the complex is formed during the late schizont stage and in merozoites. MyoA, MTIP and GAP45 probably form an initial complex in the cytoplasm which is then recruited to the outer face of the inner membrane complex via the interaction with GAP50. Interacts with GAP50; the interaction is independent of GAP45 phosphorylation status and can also occur independently of the formation of the glideosome complex. In terms of processing, phosphorylated at multiple sites. Phosphorylation increases during the schizont stage and peaks in segmented merozoites. May be phosphorylated by PKB. In schizonts, phosphorylated at Ser-89 and Ser-149 in response to phospholipase C-mediated calcium release. Phosphorylation at Ser-149 begins in early schizonts while phosphorylation at Ser-103 begins in late schizonts. Phosphorylation at Ser-89, Ser-103 and Ser-149 appears to be dispensable for GAP45 inner membrane complex localization or GAP45 inclusion in the glideosome complex. Phosphorylation is not required for interaction with GAP50; however, it may regulate the interaction with MTIP and MyoA. Post-translationally, N-myristoylated by NMT. N-myristoylation may contribute to the targeting of GAP45 to the inner membrane complex with the subsequent palmitoylation strengthening the interaction with the membrane. Palmitoylated. Palmitoylation appears to follow N-myristoylation and may strengthen the interaction with the inner membrane complex.

It localises to the inner membrane complex. Its function is as follows. Component of the glideosome complex, an inner membrane complex structure involved in parasite gliding motility and host cell invasion. During the asexual blood stage, required in schizonts to recruit MTIP and MyoA to the inner membrane complex where they assemble with GAP50 to form the glideosome complex. By regulating the formation of the glideosome, plays an essential role during merozoite invasion of host erythrocytes. This chain is Glideosome-associated protein 45, found in Plasmodium falciparum (isolate 3D7).